Here is a 325-residue protein sequence, read N- to C-terminus: uncharacterized protein (325 aa).

The segment at M1–Q75 is disordered. Pro residues predominate over residues Y24–Y70. A run of 4 helical transmembrane segments spans residues A96 to A116, I153 to I173, L205 to F225, and L273 to I293.

The protein resides in the cell membrane. This is an uncharacterized protein from Mycobacterium tuberculosis (strain ATCC 25618 / H37Rv).